The primary structure comprises 346 residues: Growth hormone-inducible transmembrane protein (346 aa).

Residues 1–45 (MLAARLVCLRTLPSRVFQPTFITKASPLVKNSITKNQWLVTPSRE) constitute a mitochondrion transit peptide. The Mitochondrial matrix segment spans residues 46-83 (YATKTRIRTHRGKTGQELKEAALEPSMEKIFKIDQMGR). Residues 84–104 (WFVAGGAAVGLGALCYYGLGM) form a helical membrane-spanning segment. The Mitochondrial intermembrane portion of the chain corresponds to 105 to 126 (SNEIGAIEKAVIWPQYVKDRIH). A helical transmembrane segment spans residues 127-147 (STYMYLAGSIGLTALSALAVA). The Mitochondrial matrix portion of the chain corresponds to 148–160 (RTPALMNFMMTGS). A helical membrane pass occupies residues 161–181 (WVTIGATFAAMIGAGMLVHSI). Residues 182-191 (SYEQSPGPKH) lie on the Mitochondrial intermembrane side of the membrane. The helical transmembrane segment at 192–212 (LAWMLHSGVMGAVVAPLTILG) threads the bilayer. Topologically, residues 213–214 (GP) are mitochondrial matrix. Residues 215-235 (LLLRAAWYTAGIVGGLSTVAM) form a helical membrane-spanning segment. Residues 236–245 (CAPSEKFLNM) lie on the Mitochondrial intermembrane side of the membrane. Residues 246–266 (GAPLGVGLGLVFASSLGSMFL) form a helical membrane-spanning segment. Residues 267–272 (PPTSVA) are Mitochondrial matrix-facing. The chain crosses the membrane as a helical span at residues 273–293 (GATLYSVAMYGGLVLFSMFLL). Residues 294–346 (YDTQKVIKRAEITPMYGAQKYDPINSMLTIYMDTLNIFMRVATMLATGSNRKK) lie on the Mitochondrial intermembrane side of the membrane.

This sequence belongs to the BI1 family. As to quaternary structure, interacts with LETM1 and AFG3L2. In terms of processing, undergoes AFG3L2-mediated proteolytic degradation, upon hyperpolarization of mitochondria.

It localises to the mitochondrion inner membrane. The catalysed reaction is Ca(2+)(in) + 2 H(+)(out) = Ca(2+)(out) + 2 H(+)(in). It catalyses the reaction K(+)(in) + H(+)(out) = K(+)(out) + H(+)(in). In terms of biological role, plays an important role in maintenance of mitochondrial morphology and in mediating either calcium or potassium/proton antiport. Mediates proton-dependent calcium efflux from mitochondrion. Also functions as an electroneutral mitochondrial proton/potassium exchanger. Required for the mitochondrial tubular network and cristae organization. Involved in apoptotic release of cytochrome c. Inhibits AFG3L2 proteolytic activity, stimulating respiration and stabilizing respiratory enzymes in actively respiring mitochondria. However, when mitochondria become hyperpolarized, GHITM loses its inhibitory activity toward AFG3L2 and the now active AFG3L2 turns first on GHITM and, if hyperpolarization persists, on other proteins of the mitochondria, leading to a broad remodeling of the mitochondrial proteome. The sequence is that of Growth hormone-inducible transmembrane protein (Ghitm) from Mus musculus (Mouse).